Reading from the N-terminus, the 253-residue chain is MITNTAAYQFAPIHDPQQLADSVLERAQQRALKGSVLVAEEGINLFLAGDAEQIAGFYAWLHADARFAQMRVKYSHSAEQPFARLKVKVKPEIISFRRDDASPLQGRAPSVAPAMLRKWMQQGHDDHGRPLVLLDTRNAQEVAYGTFQGALTLPIDKFTELPEALQPHRAALADATVVSFCTGGIRCEKAALWMHAEGMDNVLQLEGGILGYFEDVGGEGYDGRCFVFDERVALDAELRPLGDGAACADAGKI.

Positions 127–221 (HGRPLVLLDT…YFEDVGGEGY (95 aa)) constitute a Rhodanese domain. Cysteine 181 acts as the Cysteine persulfide intermediate in catalysis.

This sequence belongs to the TrhO family.

It catalyses the reaction uridine(34) in tRNA + AH2 + O2 = 5-hydroxyuridine(34) in tRNA + A + H2O. Functionally, catalyzes oxygen-dependent 5-hydroxyuridine (ho5U) modification at position 34 in tRNAs. The polypeptide is tRNA uridine(34) hydroxylase (Xanthomonas campestris pv. campestris (strain B100)).